A 504-amino-acid chain; its full sequence is Anaerobic nitric oxide reductase transcription regulator NorR (504 aa).

A 4-aspartylphosphate modification is found at D57. Residues 187–416 form the Sigma-54 factor interaction domain; sequence MIGLSPGMTQ…LEHAIHRAVV (230 aa). ATP is bound by residues 215 to 222 and 278 to 287; these read GETGTGKE and ADNGTLFLDE. A DNA-binding region (H-T-H motif) is located at residues 479–498; that stretch reads WAACARMLETDVANLHRLAK.

Its pathway is nitrogen metabolism; nitric oxide reduction. Its function is as follows. Required for the expression of anaerobic nitric oxide (NO) reductase, acts as a transcriptional activator for at least the norVW operon. Activation also requires sigma-54. In Escherichia coli (strain SE11), this protein is Anaerobic nitric oxide reductase transcription regulator NorR.